The following is a 209-amino-acid chain: Kynurenine formamidase (209 aa).

Residue W19 coordinates substrate. Zn(2+) contacts are provided by H49, H53, and D55. The Proton donor/acceptor role is filled by H59. Residues H160 and E172 each coordinate Zn(2+).

It belongs to the Cyclase 1 superfamily. KynB family. In terms of assembly, homodimer. The cofactor is Zn(2+).

It catalyses the reaction N-formyl-L-kynurenine + H2O = L-kynurenine + formate + H(+). The protein operates within amino-acid degradation; L-tryptophan degradation via kynurenine pathway; L-kynurenine from L-tryptophan: step 2/2. Its function is as follows. Catalyzes the hydrolysis of N-formyl-L-kynurenine to L-kynurenine, the second step in the kynurenine pathway of tryptophan degradation. The sequence is that of Kynurenine formamidase from Ralstonia nicotianae (strain ATCC BAA-1114 / GMI1000) (Ralstonia solanacearum).